Here is a 316-residue protein sequence, read N- to C-terminus: 4-diphosphocytidyl-2-C-methyl-D-erythritol kinase (316 aa).

Lys32 is a catalytic residue. 126–136 (PVGAGLGGGSA) serves as a coordination point for ATP. The active site involves Asp168.

Belongs to the GHMP kinase family. IspE subfamily.

The enzyme catalyses 4-CDP-2-C-methyl-D-erythritol + ATP = 4-CDP-2-C-methyl-D-erythritol 2-phosphate + ADP + H(+). It participates in isoprenoid biosynthesis; isopentenyl diphosphate biosynthesis via DXP pathway; isopentenyl diphosphate from 1-deoxy-D-xylulose 5-phosphate: step 3/6. Its function is as follows. Catalyzes the phosphorylation of the position 2 hydroxy group of 4-diphosphocytidyl-2C-methyl-D-erythritol. The protein is 4-diphosphocytidyl-2-C-methyl-D-erythritol kinase of Bifidobacterium longum (strain NCC 2705).